The chain runs to 274 residues: Glutamate racemase (274 aa).

Substrate-binding positions include 9–10 and 41–42; these read DS and YG. Cys-73 functions as the Proton donor/acceptor in the catalytic mechanism. 74–75 serves as a coordination point for substrate; the sequence is NT. Catalysis depends on Cys-183, which acts as the Proton donor/acceptor. Position 184-185 (184-185) interacts with substrate; the sequence is TH.

Belongs to the aspartate/glutamate racemases family.

It catalyses the reaction L-glutamate = D-glutamate. The protein operates within cell wall biogenesis; peptidoglycan biosynthesis. In terms of biological role, provides the (R)-glutamate required for cell wall biosynthesis. This Shewanella baltica (strain OS185) protein is Glutamate racemase.